Here is a 194-residue protein sequence, read N- to C-terminus: Peptidyl-tRNA hydrolase (194 aa).

TRNA is bound at residue tyrosine 17. Histidine 22 serves as the catalytic Proton acceptor. TRNA-binding residues include phenylalanine 68, asparagine 70, and asparagine 116.

The protein belongs to the PTH family. As to quaternary structure, monomer.

Its subcellular location is the cytoplasm. It carries out the reaction an N-acyl-L-alpha-aminoacyl-tRNA + H2O = an N-acyl-L-amino acid + a tRNA + H(+). Its function is as follows. Hydrolyzes ribosome-free peptidyl-tRNAs (with 1 or more amino acids incorporated), which drop off the ribosome during protein synthesis, or as a result of ribosome stalling. Functionally, catalyzes the release of premature peptidyl moieties from peptidyl-tRNA molecules trapped in stalled 50S ribosomal subunits, and thus maintains levels of free tRNAs and 50S ribosomes. This Histophilus somni (strain 2336) (Haemophilus somnus) protein is Peptidyl-tRNA hydrolase.